A 404-amino-acid polypeptide reads, in one-letter code: Argininosuccinate synthase (404 aa).

ATP is bound by residues 10–18 (AYSGGVDTS) and A38. Residue Y89 participates in L-citrulline binding. G119 is a binding site for ATP. Positions 121, 125, and 126 each coordinate L-aspartate. Residue N125 coordinates L-citrulline. The L-citrulline site is built by R129, S177, S186, E262, and Y274.

This sequence belongs to the argininosuccinate synthase family. Type 1 subfamily. Homotetramer.

It is found in the cytoplasm. It carries out the reaction L-citrulline + L-aspartate + ATP = 2-(N(omega)-L-arginino)succinate + AMP + diphosphate + H(+). It participates in amino-acid biosynthesis; L-arginine biosynthesis; L-arginine from L-ornithine and carbamoyl phosphate: step 2/3. This is Argininosuccinate synthase from Prochlorococcus marinus (strain MIT 9301).